Reading from the N-terminus, the 466-residue chain is DNA polymerase delta subunit 3 (466 aa).

The residue at position 2 (Ala2) is an N-acetylalanine. Disordered regions lie at residues 169–188 and 199–232; these read NNEL…VSQQ and KAAA…PGKG. A compositionally biased stretch (basic and acidic residues) spans 206–217; the sequence is ETNKETKTEAKE. Lys258 is covalently cross-linked (Glycyl lysine isopeptide (Lys-Gly) (interchain with G-Cter in SUMO); alternate). Lys258 participates in a covalent cross-link: Glycyl lysine isopeptide (Lys-Gly) (interchain with G-Cter in SUMO2); alternate. Lys261 participates in a covalent cross-link: Glycyl lysine isopeptide (Lys-Gly) (interchain with G-Cter in SUMO2). Disordered stretches follow at residues 274-393 and 406-466; these read KLAT…KTYL and ESES…FQRK. Thr277 is subject to Phosphothreonine. Over residues 286-296 the composition is skewed to basic and acidic residues; sequence KKAEPVKVLQK. Ser307 carries the post-translational modification Phosphoserine. A compositionally biased stretch (pro residues) spans 349 to 361; the sequence is PSPPPPPSPPLEP. Phosphoserine occurs at positions 407 and 409. Thr411 carries the post-translational modification Phosphothreonine. The residue at position 413 (Ser413) is a Phosphoserine. Residues 432–441 are compositionally biased toward basic and acidic residues; that stretch reads VKKEPREERK. A Glycyl lysine isopeptide (Lys-Gly) (interchain with G-Cter in SUMO); alternate cross-link involves residue Lys433. Lys433 is covalently cross-linked (Glycyl lysine isopeptide (Lys-Gly) (interchain with G-Cter in SUMO2); alternate). Positions 455–466 are enriched in polar residues; sequence RQVSITGFFQRK. A PIP-box motif is present at residues 456-463; sequence QVSITGFF. Ser458 is subject to Phosphoserine.

In terms of assembly, component of both the DNA polymerase delta and DNA polymerase zeta complexes. The tetrameric DNA polymerase delta complex (Pol-delta4), which consists of POLD1/p125, POLD2/p50, POLD3/p66/p68 and POLD4/p12, with POLD1 bearing DNA polymerase and 3' to 5' proofreading exonuclease activities. Within this complex, directly interacts with POLD2. Following stress caused by DNA damaging agents or by replication stress, POLD4 is degraded and Pol-delta4 is converted into a trimeric form of the complex (Pol-delta3), which consists of POLD1, POLD2 and POLD3. Pol-delta3 is the major form occurring at S phase replication sites, as well as DNA damage sites. Directly interacts with PCNA, as do POLD1 and POLD4; this interaction stimulates Pol-delta polymerase activity. POLD3 phosphorylation at Ser-458 impairs PCNA binding. Component of the DNA polymerase zeta complex (POLZ), which consists of REV3L, MAD2L2, POLD2 and POLD3, with REV3L bearing DNA polymerase catalytic activity. The DNA polymerase delta complex interacts with POLDIP2; this interaction is probably mediated through direct binding to POLD2. In terms of processing, ubiquitinated, but not targeted to the proteasome. Sumoylated. Sumoylation with SUMO3 may be predominant. Post-translationally, phosphorylation at Ser-458 is catalyzed in vitro by PKA. It is thought to decrease the affinity for PCNA and Pol-delta4 processivity. Can also be phosphorylated in vitro by CDK1-cyclin-A complex, as well as CDK2-cyclin-A and CDK2-cyclin-E complexes. PCNA interferes with CDK-cyclin phosphorylation.

The protein resides in the cytoplasm. It is found in the nucleus. Its function is as follows. Accessory component of both the DNA polymerase delta complex and the DNA polymerase zeta complex. As a component of the trimeric and tetrameric DNA polymerase delta complexes (Pol-delta3 and Pol-delta4, respectively), plays a role in high fidelity genome replication, including in lagging strand synthesis, and repair. Required for optimal Pol-delta activity. Stabilizes the Pol-delta complex and plays a major role in Pol-delta stimulation by PCNA. Pol-delta3 and Pol-delta4 are characterized by the absence or the presence of POLD4. They exhibit differences in catalytic activity. Most notably, Pol-delta3 shows higher proofreading activity than Pol-delta4. Although both Pol-delta3 and Pol-delta4 process Okazaki fragments in vitro, Pol-delta3 may also be better suited to fulfill this task, exhibiting near-absence of strand displacement activity compared to Pol-delta4 and stalling on encounter with the 5'-blocking oligonucleotides. Pol-delta3 idling process may avoid the formation of a gap, while maintaining a nick that can be readily ligated. Along with DNA polymerase kappa, DNA polymerase delta carries out approximately half of nucleotide excision repair (NER) synthesis following UV irradiation. In this context, POLD3, along with PCNA and RFC1-replication factor C complex, is required to recruit POLD1, the catalytic subunit of the polymerase delta complex, to DNA damage sites. Under conditions of DNA replication stress, required for the repair of broken replication forks through break-induced replication (BIR). Involved in the translesion synthesis (TLS) of templates carrying O6-methylguanine or abasic sites performed by Pol-delta4, independently of DNA polymerase zeta (REV3L) or eta (POLH). Facilitates abasic site bypass by DNA polymerase delta by promoting extension from the nucleotide inserted opposite the lesion. Also involved in TLS, as a component of the tetrameric DNA polymerase zeta complex. Along with POLD2, dramatically increases the efficiency and processivity of DNA synthesis of the DNA polymerase zeta complex compared to the minimal zeta complex, consisting of only REV3L and REV7. The protein is DNA polymerase delta subunit 3 (POLD3) of Homo sapiens (Human).